Consider the following 284-residue polypeptide: Sulfotransferase 2A1 (284 aa).

3'-phosphoadenylyl sulfate contacts are provided by Lys-43, Ser-44, Gly-45, Thr-46, Asn-47, and Trp-48. The Proton acceptor role is filled by His-98. Positions 120, 128, 183, 217, 222, 246, 247, and 248 each coordinate 3'-phosphoadenylyl sulfate.

It belongs to the sulfotransferase 1 family. Homodimer.

It is found in the cytoplasm. It carries out the reaction an alcohol + 3'-phosphoadenylyl sulfate = an alkyl sulfate + adenosine 3',5'-bisphosphate + H(+). The catalysed reaction is taurolithocholate + 3'-phosphoadenylyl sulfate = taurolithocholate 3-sulfate + adenosine 3',5'-bisphosphate + H(+). It catalyses the reaction lithocholate + 3'-phosphoadenylyl sulfate = lithocholate sulfate + adenosine 3',5'-bisphosphate + H(+). The enzyme catalyses (24S)-hydroxycholesterol + 3'-phosphoadenylyl sulfate = (24S)-hydroxycholesterol 24-sulfate + adenosine 3',5'-bisphosphate + H(+). It carries out the reaction (24S)-hydroxycholesterol + 3'-phosphoadenylyl sulfate = (24S)-hydroxycholesterol 3-sulfate + adenosine 3',5'-bisphosphate + H(+). The catalysed reaction is (24S)-hydroxycholesterol 24-sulfate + 3'-phosphoadenylyl sulfate = (24S)-hydroxycholesterol 3,24-disulfate + adenosine 3',5'-bisphosphate + H(+). It catalyses the reaction 3beta-hydroxyandrost-5-en-17-one + 3'-phosphoadenylyl sulfate = dehydroepiandrosterone 3-sulfate + adenosine 3',5'-bisphosphate + H(+). The enzyme catalyses pregnenolone + 3'-phosphoadenylyl sulfate = pregnenolone sulfate + adenosine 3',5'-bisphosphate + H(+). It carries out the reaction androsterone + 3'-phosphoadenylyl sulfate = androsterone 3alpha-sulfate + adenosine 3',5'-bisphosphate + H(+). In terms of biological role, sulfotransferase that utilizes 3'-phospho-5'-adenylyl sulfate (PAPS) as sulfonate donor to catalyze the sulfonation of steroids and bile acids in the liver and adrenal glands. Mediates the sulfation of a wide range of steroids and sterols, including pregnenolone, androsterone, DHEA, bile acids, cholesterol and as well many xenobiotics that contain alcohol and phenol functional groups. Sulfonation increases the water solubility of most compounds, and therefore their renal excretion, but it can also result in bioactivation to form active metabolites. Plays an important role in maintening steroid and lipid homeostasis. Plays a key role in bile acid metabolism. In addition, catalyzes the metabolic activation of potent carcinogenic polycyclic arylmethanols. This Rattus norvegicus (Rat) protein is Sulfotransferase 2A1 (Sult2a1).